The sequence spans 181 residues: ATP synthase subunit b, chloroplastic (181 aa).

A helical membrane pass occupies residues 27–49; sequence LATNPINLSVVLGVVIYFGKGVL.

It belongs to the ATPase B chain family. As to quaternary structure, F-type ATPases have 2 components, F(1) - the catalytic core - and F(0) - the membrane proton channel. F(1) has five subunits: alpha(3), beta(3), gamma(1), delta(1), epsilon(1). F(0) has four main subunits: a(1), b(1), b'(1) and c(10-14). The alpha and beta chains form an alternating ring which encloses part of the gamma chain. F(1) is attached to F(0) by a central stalk formed by the gamma and epsilon chains, while a peripheral stalk is formed by the delta, b and b' chains.

The protein resides in the plastid. Its subcellular location is the chloroplast thylakoid membrane. Its function is as follows. F(1)F(0) ATP synthase produces ATP from ADP in the presence of a proton or sodium gradient. F-type ATPases consist of two structural domains, F(1) containing the extramembraneous catalytic core and F(0) containing the membrane proton channel, linked together by a central stalk and a peripheral stalk. During catalysis, ATP synthesis in the catalytic domain of F(1) is coupled via a rotary mechanism of the central stalk subunits to proton translocation. Component of the F(0) channel, it forms part of the peripheral stalk, linking F(1) to F(0). The chain is ATP synthase subunit b, chloroplastic from Lemna minor (Common duckweed).